Consider the following 302-residue polypeptide: Sulfate adenylyltransferase subunit 2 (302 aa).

The protein belongs to the PAPS reductase family. CysD subfamily. As to quaternary structure, heterodimer composed of CysD, the smaller subunit, and CysN.

It catalyses the reaction sulfate + ATP + H(+) = adenosine 5'-phosphosulfate + diphosphate. Its pathway is sulfur metabolism; hydrogen sulfide biosynthesis; sulfite from sulfate: step 1/3. Its function is as follows. With CysN forms the ATP sulfurylase (ATPS) that catalyzes the adenylation of sulfate producing adenosine 5'-phosphosulfate (APS) and diphosphate, the first enzymatic step in sulfur assimilation pathway. APS synthesis involves the formation of a high-energy phosphoric-sulfuric acid anhydride bond driven by GTP hydrolysis by CysN coupled to ATP hydrolysis by CysD. The protein is Sulfate adenylyltransferase subunit 2 of Sodalis glossinidius (strain morsitans).